Consider the following 97-residue polypeptide: Co-chaperonin GroES (97 aa).

It belongs to the GroES chaperonin family. Heptamer of 7 subunits arranged in a ring. Interacts with the chaperonin GroEL.

The protein localises to the cytoplasm. In terms of biological role, together with the chaperonin GroEL, plays an essential role in assisting protein folding. The GroEL-GroES system forms a nano-cage that allows encapsulation of the non-native substrate proteins and provides a physical environment optimized to promote and accelerate protein folding. GroES binds to the apical surface of the GroEL ring, thereby capping the opening of the GroEL channel. The chain is Co-chaperonin GroES from Buchnera aphidicola subsp. Baizongia pistaciae (strain Bp).